The sequence spans 62 residues: Alpha-conotoxin ViIA (62 aa).

The N-terminal stretch at 1–18 is a signal peptide; sequence MGMRMMFVVFLLVVFASS. Residues 19 to 45 constitute a propeptide that is removed on maturation; sequence VTLDRASYGRYASPVDRASALIAQAIL. Disulfide bonds link C48–C54 and C49–C61.

Belongs to the conotoxin A superfamily. The toxin is inactive on the alpha-3-beta-2 nAChR when the disulfide bond connectivity is C1-C4 and C2-C3 (ViIA-I) (IC(50)&gt;10000 nM). As to expression, expressed by the venom duct.

It is found in the secreted. Alpha-conotoxins act on postsynaptic membranes, they bind to the nicotinic acetylcholine receptors (nAChR) and thus inhibit them. This toxin selectively inhibits nicotinic acetylcholine receptor (nAChR) alpha-3-beta-2 subtype (IC(50)=845.5 nM). The sequence is that of Alpha-conotoxin ViIA from Conus virgo (Virgin cone).